A 299-amino-acid polypeptide reads, in one-letter code: Hydroxymethylglutaryl-CoA lyase YngG (299 aa).

Positions valine 7 to leucine 274 constitute a Pyruvate carboxyltransferase domain. Arginine 15 lines the substrate pocket. Residues aspartate 16, histidine 207, and histidine 209 each coordinate a divalent metal cation. Cysteine 240 is an active-site residue. Asparagine 249 serves as a coordination point for a divalent metal cation.

Belongs to the HMG-CoA lyase family. In terms of assembly, homodimer and homotetramer.

It catalyses the reaction (3S)-3-hydroxy-3-methylglutaryl-CoA = acetoacetate + acetyl-CoA. It participates in metabolic intermediate metabolism; (S)-3-hydroxy-3-methylglutaryl-CoA degradation; acetoacetate from (S)-3-hydroxy-3-methylglutaryl-CoA: step 1/1. In terms of biological role, involved in the catabolism of branched amino acids such as leucine. The chain is Hydroxymethylglutaryl-CoA lyase YngG (yngG) from Bacillus subtilis (strain 168).